The chain runs to 268 residues: UPF0328 protein ECU10_1850 (268 aa).

It belongs to the UPF0328 family.

This is UPF0328 protein ECU10_1850 from Encephalitozoon cuniculi (strain GB-M1) (Microsporidian parasite).